A 712-amino-acid chain; its full sequence is Protein SDA1 homolog (712 aa).

Thr234 is subject to Phosphothreonine. Ser236 carries the phosphoserine modification. 2 disordered regions span residues Thr488–Ile573 and Val662–Lys712. Acidic residues-rich tracts occupy residues Ile491–Asp501 and Gly516–Glu559. Positions Glu560 to Arg572 are enriched in basic and acidic residues. Basic residues-rich tracts occupy residues Arg671–Lys692 and Ala700–Lys712.

This sequence belongs to the SDA1 family.

Its subcellular location is the nucleus. The protein resides in the nucleolus. In terms of biological role, required for 60S pre-ribosomal subunits export to the cytoplasm. This Drosophila melanogaster (Fruit fly) protein is Protein SDA1 homolog (Mys45A).